The following is a 179-amino-acid chain: Casparian strip membrane protein 1 (179 aa).

At 1-17 the chain is on the cytoplasmic side; the sequence is MKAGPLQLGVVPPANRA. A helical transmembrane segment spans residues 18–38; that stretch reads IAILDFFLRPIAIVGTLASAI. At 39 to 67 the chain is on the extracellular side; sequence AMATTNQTLPFFSQFIRFRAKFNDLPSFT. N44 is a glycosylation site (N-linked (GlcNAc...) asparagine). The chain crosses the membrane as a helical span at residues 68–88; that stretch reads FFVVASSIVSAYLILSLGFSI. Residues 89–100 are Cytoplasmic-facing; it reads LHIAKSNLVNSR. Residues 101–121 traverse the membrane as a helical segment; the sequence is VLLLLLDTAAMGLLMAGSAAA. Residues 122–154 are Extracellular-facing; it reads TAIVQLAHKGNNKVNWFAICQQYNSFCKRVSGS. A helical transmembrane segment spans residues 155 to 175; it reads LIGSYAGVVVLILLILLSGVA. The Cytoplasmic portion of the chain corresponds to 176–179; it reads LSRR.

This sequence belongs to the Casparian strip membrane proteins (CASP) family. Homodimer and heterodimers.

The protein localises to the cell membrane. Regulates membrane-cell wall junctions and localized cell wall deposition. Required for establishment of the Casparian strip membrane domain (CSD) and the subsequent formation of Casparian strips, a cell wall modification of the root endodermis that determines an apoplastic barrier between the intraorganismal apoplasm and the extraorganismal apoplasm and prevents lateral diffusion. This Lactuca sativa (Garden lettuce) protein is Casparian strip membrane protein 1.